Consider the following 604-residue polypeptide: Sulfite reductase [NADPH] flavoprotein alpha-component (604 aa).

The Flavodoxin-like domain occupies 68-206 (LSIIFASQTG…PAAEWRKQAL (139 aa)). FMN-binding positions include 74–79 (SQTGNA), 121–124 (STNG), and 157–166 (LGDSSYEFFC). An FAD-binding FR-type domain is found at 239-453 (QNPYTATLLT…VEHNNNFKLP (215 aa)). Residues Thr-327, Gly-361, 391-394 (RLYS), 409-411 (TVG), Tyr-415, and 424-427 (GGAS) contribute to the FAD site. NADP(+) is bound by residues 524–525 (SR), 530–534 (KVYVQ), and Asp-566. Tyr-604 lines the FAD pocket.

This sequence belongs to the NADPH-dependent sulphite reductase flavoprotein subunit CysJ family. In the N-terminal section; belongs to the flavodoxin family. The protein in the C-terminal section; belongs to the flavoprotein pyridine nucleotide cytochrome reductase family. In terms of assembly, alpha(8)-beta(8). The alpha component is a flavoprotein, the beta component is a hemoprotein. The cofactor is FAD. FMN is required as a cofactor.

The catalysed reaction is hydrogen sulfide + 3 NADP(+) + 3 H2O = sulfite + 3 NADPH + 4 H(+). The protein operates within sulfur metabolism; hydrogen sulfide biosynthesis; hydrogen sulfide from sulfite (NADPH route): step 1/1. Functionally, component of the sulfite reductase complex that catalyzes the 6-electron reduction of sulfite to sulfide. This is one of several activities required for the biosynthesis of L-cysteine from sulfate. The flavoprotein component catalyzes the electron flow from NADPH -&gt; FAD -&gt; FMN to the hemoprotein component. The chain is Sulfite reductase [NADPH] flavoprotein alpha-component from Aliivibrio fischeri (strain ATCC 700601 / ES114) (Vibrio fischeri).